The primary structure comprises 238 residues: Uridylate kinase (238 aa).

12-15 (KLSG) lines the ATP pocket. G54 is a binding site for UMP. Positions 55 and 59 each coordinate ATP. UMP-binding positions include D74 and 135-142 (TGNPFFTT). Residues T162, Y168, and D171 each contribute to the ATP site.

Belongs to the UMP kinase family. In terms of assembly, homohexamer.

The protein resides in the cytoplasm. The catalysed reaction is UMP + ATP = UDP + ADP. The protein operates within pyrimidine metabolism; CTP biosynthesis via de novo pathway; UDP from UMP (UMPK route): step 1/1. With respect to regulation, inhibited by UTP. Functionally, catalyzes the reversible phosphorylation of UMP to UDP. In Herminiimonas arsenicoxydans, this protein is Uridylate kinase.